A 203-amino-acid chain; its full sequence is MLAKLDRLLSQANIPLTDQQKQQLVDFVKLLDKWNKAYNLTSVRNPDEMLVKHIMDSLVVSQHLQGQQFIDVGTGPGLPGIPLAIANPDKQFVLLDSLGKRITFIKNAIRELKLTNVTPVLSRVEEYQEQQFDGVLSRAFASLNDMVDWCYHLPNTSGHFYALKGQYQPEELAEVSKPIELVDVIKLNVPELVGERHLVVLNR.

S-adenosyl-L-methionine-binding positions include glycine 73, leucine 78, 124–125 (VE), and arginine 138.

The protein belongs to the methyltransferase superfamily. RNA methyltransferase RsmG family.

The protein resides in the cytoplasm. The enzyme catalyses guanosine(527) in 16S rRNA + S-adenosyl-L-methionine = N(7)-methylguanosine(527) in 16S rRNA + S-adenosyl-L-homocysteine. Specifically methylates the N7 position of guanine in position 527 of 16S rRNA. The polypeptide is Ribosomal RNA small subunit methyltransferase G (Glaesserella parasuis serovar 5 (strain SH0165) (Haemophilus parasuis)).